Consider the following 276-residue polypeptide: NADPH-dependent 7-cyano-7-deazaguanine reductase (276 aa).

83 to 85 (IES) contacts substrate. Position 85–86 (85–86 (SK)) interacts with NADPH. Cys-184 functions as the Thioimide intermediate in the catalytic mechanism. Asp-191 (proton donor) is an active-site residue. 223-224 (HE) provides a ligand contact to substrate. Residue 252–253 (RG) participates in NADPH binding.

It belongs to the GTP cyclohydrolase I family. QueF type 2 subfamily. As to quaternary structure, homodimer.

The protein localises to the cytoplasm. It catalyses the reaction 7-aminomethyl-7-carbaguanine + 2 NADP(+) = 7-cyano-7-deazaguanine + 2 NADPH + 3 H(+). The protein operates within tRNA modification; tRNA-queuosine biosynthesis. In terms of biological role, catalyzes the NADPH-dependent reduction of 7-cyano-7-deazaguanine (preQ0) to 7-aminomethyl-7-deazaguanine (preQ1). The chain is NADPH-dependent 7-cyano-7-deazaguanine reductase from Pseudomonas putida (strain W619).